We begin with the raw amino-acid sequence, 371 residues long: MTSIEPTHLGKKVIVGMSGGVDSSVSAYLLMKQGYQVEGLFMKNWEEDDTDEYCAAADDLKDAQAVCDKLGIKLHTVNFASEYWDNVFEYFLAEYKAGRTPNPDIMCNKEIKFKAFLEFADEILDADYIAMGHYVRRRDIDGTSQMLRGIDGNKDQSYFLYTLGHEQVARSLFPVGELEKSEVREIAKEMGLITHDKKDSTGICFIGERKFTDFLQTFLPAQPGNIETSEGEVIGTHQGLMYHTLGQRKGLGIGGLKNSNEDPWYVVEKDLVRNVLIVGQGGNHPRLMSNGLIANQLHWVDRKGPADGSNITVKTRYRQQDVPCRVTYDSDDILRVIFDEPVAAVTPGQSAVFYDGEICLGGGIIDALIRD.

ATP-binding positions include Gly-16–Ser-23 and Met-42. The tract at residues Asn-102 to Asp-104 is interaction with target base in tRNA. The active-site Nucleophile is Cys-107. Cys-107 and Cys-204 are oxidised to a cystine. Gly-132 contacts ATP. Residues Lys-154 to Gln-156 form an interaction with tRNA region. Catalysis depends on Cys-204, which acts as the Cysteine persulfide intermediate. An interaction with tRNA region spans residues Arg-316 to Tyr-317.

This sequence belongs to the MnmA/TRMU family.

The protein localises to the cytoplasm. It carries out the reaction S-sulfanyl-L-cysteinyl-[protein] + uridine(34) in tRNA + AH2 + ATP = 2-thiouridine(34) in tRNA + L-cysteinyl-[protein] + A + AMP + diphosphate + H(+). In terms of biological role, catalyzes the 2-thiolation of uridine at the wobble position (U34) of tRNA, leading to the formation of s(2)U34. The protein is tRNA-specific 2-thiouridylase MnmA of Shewanella halifaxensis (strain HAW-EB4).